Consider the following 375-residue polypeptide: Succinyl-diaminopimelate desuccinylase (375 aa).

His-66 provides a ligand contact to Zn(2+). The active site involves Asp-68. Residue Asp-99 coordinates Zn(2+). Glu-133 (proton acceptor) is an active-site residue. Zn(2+)-binding residues include Glu-134, Glu-162, and His-348.

This sequence belongs to the peptidase M20A family. DapE subfamily. In terms of assembly, homodimer. Zn(2+) is required as a cofactor. Co(2+) serves as cofactor.

It catalyses the reaction N-succinyl-(2S,6S)-2,6-diaminopimelate + H2O = (2S,6S)-2,6-diaminopimelate + succinate. It functions in the pathway amino-acid biosynthesis; L-lysine biosynthesis via DAP pathway; LL-2,6-diaminopimelate from (S)-tetrahydrodipicolinate (succinylase route): step 3/3. Functionally, catalyzes the hydrolysis of N-succinyl-L,L-diaminopimelic acid (SDAP), forming succinate and LL-2,6-diaminopimelate (DAP), an intermediate involved in the bacterial biosynthesis of lysine and meso-diaminopimelic acid, an essential component of bacterial cell walls. The protein is Succinyl-diaminopimelate desuccinylase of Citrobacter koseri (strain ATCC BAA-895 / CDC 4225-83 / SGSC4696).